The primary structure comprises 183 residues: ATP synthase subunit delta (183 aa).

Belongs to the ATPase delta chain family. In terms of assembly, F-type ATPases have 2 components, F(1) - the catalytic core - and F(0) - the membrane proton channel. F(1) has five subunits: alpha(3), beta(3), gamma(1), delta(1), epsilon(1). F(0) has three main subunits: a(1), b(2) and c(10-14). The alpha and beta chains form an alternating ring which encloses part of the gamma chain. F(1) is attached to F(0) by a central stalk formed by the gamma and epsilon chains, while a peripheral stalk is formed by the delta and b chains.

The protein resides in the cell inner membrane. Its function is as follows. F(1)F(0) ATP synthase produces ATP from ADP in the presence of a proton or sodium gradient. F-type ATPases consist of two structural domains, F(1) containing the extramembraneous catalytic core and F(0) containing the membrane proton channel, linked together by a central stalk and a peripheral stalk. During catalysis, ATP synthesis in the catalytic domain of F(1) is coupled via a rotary mechanism of the central stalk subunits to proton translocation. This protein is part of the stalk that links CF(0) to CF(1). It either transmits conformational changes from CF(0) to CF(1) or is implicated in proton conduction. In Chloroherpeton thalassium (strain ATCC 35110 / GB-78), this protein is ATP synthase subunit delta.